We begin with the raw amino-acid sequence, 119 residues long: Protein phosphatase EYA1 (119 aa).

It belongs to the HAD-like hydrolase superfamily. EYA family. The cofactor is Mg(2+).

The protein resides in the cytoplasm. Its subcellular location is the nucleus. It catalyses the reaction O-phospho-L-tyrosyl-[protein] + H2O = L-tyrosyl-[protein] + phosphate. The enzyme catalyses O-phospho-L-seryl-[protein] + H2O = L-seryl-[protein] + phosphate. It carries out the reaction O-phospho-L-threonyl-[protein] + H2O = L-threonyl-[protein] + phosphate. In terms of biological role, functions both as protein phosphatase and as transcriptional coactivator for SIX1, and probably also for other transcription factors of this family. Tyrosine phosphatase that dephosphorylates 'Tyr-142' of histone H2AX (H2AXY142ph) and promotes efficient DNA repair via the recruitment of DNA repair complexes containing MDC1. 'Tyr-142' phosphorylation of histone H2AX plays a central role in DNA repair and acts as a mark that distinguishes between apoptotic and repair responses to genotoxic stress. Its function as histone phosphatase may contribute to its function in transcription regulation during organogenesis. Also has phosphatase activity with proteins phosphorylated on Ser and Thr residues (in vitro). Required for normal embryonic development of the skeleton, kidneys and ears. This chain is Protein phosphatase EYA1 (EYA1), found in Gallus gallus (Chicken).